The following is a 351-amino-acid chain: Histidinol-phosphate aminotransferase (351 aa).

Lysine 213 is modified (N6-(pyridoxal phosphate)lysine).

This sequence belongs to the class-II pyridoxal-phosphate-dependent aminotransferase family. Histidinol-phosphate aminotransferase subfamily. As to quaternary structure, homodimer. It depends on pyridoxal 5'-phosphate as a cofactor.

The catalysed reaction is L-histidinol phosphate + 2-oxoglutarate = 3-(imidazol-4-yl)-2-oxopropyl phosphate + L-glutamate. It functions in the pathway amino-acid biosynthesis; L-histidine biosynthesis; L-histidine from 5-phospho-alpha-D-ribose 1-diphosphate: step 7/9. This chain is Histidinol-phosphate aminotransferase, found in Clostridium kluyveri (strain NBRC 12016).